Here is a 46-residue protein sequence, read N- to C-terminus: Hellethionin-D (46 aa).

4 cysteine pairs are disulfide-bonded: C3–C40, C4–C32, C12–C30, and C16–C26.

This sequence belongs to the plant thionin (TC 1.C.44) family. 4 C-C subfamily.

The protein localises to the secreted. Its function is as follows. Thionins are small plant proteins which are toxic to animal cells. They seem to exert their toxic effect at the level of the cell membrane. Their precise function is not known. In Helleborus purpurascens (Purple hellebore), this protein is Hellethionin-D.